Here is a 92-residue protein sequence, read N- to C-terminus: Small ribosomal subunit protein bS20 (92 aa).

The disordered stretch occupies residues 1 to 23 (MANSPSAKKRAKQAEKRRSHNAS). Positions 7 to 20 (AKKRAKQAEKRRSH) are enriched in basic residues.

Belongs to the bacterial ribosomal protein bS20 family.

Functionally, binds directly to 16S ribosomal RNA. This Ectopseudomonas mendocina (strain ymp) (Pseudomonas mendocina) protein is Small ribosomal subunit protein bS20.